A 117-amino-acid polypeptide reads, in one-letter code: UPF0342 protein lmo2223 (117 aa).

The protein belongs to the UPF0342 family.

The polypeptide is UPF0342 protein lmo2223 (Listeria monocytogenes serovar 1/2a (strain ATCC BAA-679 / EGD-e)).